A 930-amino-acid polypeptide reads, in one-letter code: Probable SapB synthase (930 aa).

The 261-residue stretch at 256–516 folds into the Protein kinase domain; it reads YTVESALHFS…GSTRADETTR (261 aa). ATP is bound by residues 262 to 270 and Lys-285; that span reads LHFSNGGGV. Residue Asp-395 is the Proton acceptor of the active site. Residues 447-467 form a helical membrane-spanning segment; sequence YALACLRIVLFLPLTSLLAVD. Residues 501–527 are compositionally biased toward basic and acidic residues; it reads GSTRVDGSTRADETTRADETTRLDVTT. 2 disordered regions span residues 501–558 and 911–930; these read GSTR…RDSM and PFLP…HQEP. The span at 532 to 546 shows a compositional bias: low complexity; that stretch reads APDAARRPAGPVAPV. The segment covering 547 to 556 has biased composition (basic and acidic residues); the sequence is RPDDWPRSRD.

This sequence in the N-terminal section; belongs to the protein kinase superfamily.

It localises to the cell membrane. In terms of biological role, required for aerial hyphae formation. Probably involved in processing the precursor of SapB to its mature form. This is Probable SapB synthase from Streptomyces coelicolor (strain ATCC BAA-471 / A3(2) / M145).